Consider the following 180-residue polypeptide: Dual-action ribosomal maturation protein DarP (180 aa).

The protein belongs to the DarP family.

The protein resides in the cytoplasm. Functionally, member of a network of 50S ribosomal subunit biogenesis factors which assembles along the 30S-50S interface, preventing incorrect 23S rRNA structures from forming. Promotes peptidyl transferase center (PTC) maturation. This Pasteurella multocida (strain Pm70) protein is Dual-action ribosomal maturation protein DarP.